The primary structure comprises 241 residues: Tetrahydromethanopterin S-methyltransferase subunit A (241 aa).

The Cytoplasmic segment spans residues 1 to 220 (MANKREPAPG…AKWQAGYYNG (220 aa)). Histidine 85 serves as a coordination point for 5-hydroxybenzimidazolylcob(I)amide. A helical transmembrane segment spans residues 221 to 241 (KIQGIATGLFLMLLIMGILMF).

Belongs to the MtrA family. The complex is composed of 8 subunits; MtrA, MtrB, MtrC, MtrD, MtrE, MtrF, MtrG and MtrH. 5-hydroxybenzimidazolylcob(I)amide serves as cofactor.

The protein localises to the cell membrane. The catalysed reaction is 5-methyl-5,6,7,8-tetrahydromethanopterin + coenzyme M + 2 Na(+)(in) = 5,6,7,8-tetrahydromethanopterin + methyl-coenzyme M + 2 Na(+)(out). The protein operates within one-carbon metabolism; methanogenesis from CO(2); methyl-coenzyme M from 5,10-methylene-5,6,7,8-tetrahydromethanopterin: step 2/2. Its function is as follows. Part of a complex that catalyzes the formation of methyl-coenzyme M and tetrahydromethanopterin from coenzyme M and methyl-tetrahydromethanopterin. This is an energy-conserving, sodium-ion translocating step. The sequence is that of Tetrahydromethanopterin S-methyltransferase subunit A from Methanocaldococcus jannaschii (strain ATCC 43067 / DSM 2661 / JAL-1 / JCM 10045 / NBRC 100440) (Methanococcus jannaschii).